We begin with the raw amino-acid sequence, 205 residues long: GTP-binding protein rho3 (205 aa).

20–27 (GDGAAGKT) is a GTP binding site. An Effector region motif is present at residues 42-50 (YEPTIFENY). Residues 67 to 71 (DTAGQ) and 125 to 128 (LKCD) each bind GTP. At C202 the chain carries Cysteine methyl ester. Residue C202 is the site of S-geranylgeranyl cysteine attachment. The propeptide at 203 to 205 (IIA) is removed in mature form.

This sequence belongs to the small GTPase superfamily. Rho family. Interacts with for3. In terms of processing, palmitoylated by the erf2-erf4 complex.

The protein localises to the cell membrane. Involved in controlling cell shape and septation. Regulates cell separation by modulating the function of the exocyst complex. Involved in post-Golgi vesicle transport. Involved in driving sexual development in a palmitoylation-dependent manner. This Schizosaccharomyces pombe (strain 972 / ATCC 24843) (Fission yeast) protein is GTP-binding protein rho3 (rho3).